Reading from the N-terminus, the 359-residue chain is Peptide chain release factor 1 (359 aa).

Residue Q236 is modified to N5-methylglutamine.

This sequence belongs to the prokaryotic/mitochondrial release factor family. Post-translationally, methylated by PrmC. Methylation increases the termination efficiency of RF1.

The protein resides in the cytoplasm. Its function is as follows. Peptide chain release factor 1 directs the termination of translation in response to the peptide chain termination codons UAG and UAA. This is Peptide chain release factor 1 from Streptococcus agalactiae serotype V (strain ATCC BAA-611 / 2603 V/R).